The primary structure comprises 484 residues: Falcipain-2a (484 aa).

Over methionine 1 to serine 35 the chain is Cytoplasmic. Residues methionine 1–aspartate 243 constitute a propeptide, activation peptide. The Bipartite vacuolar targeting signal 1 signature appears at glutamine 16 to valine 25. A helical; Signal-anchor for type II membrane protein transmembrane segment spans residues leucine 36–threonine 56. Residues proline 57–glutamate 484 are Lumenal-facing. A glycan (N-linked (GlcNAc...) asparagine) is linked at asparagine 67. The short motif at lysine 84–serine 105 is the Bipartite vacuolar targeting signal 2 element. Positions glutamine 244–phenylalanine 260 match the Nose motif; required for the correct folding of the mature form motif. 4 disulfide bridges follow: cysteine 282–cysteine 323, cysteine 316–cysteine 357, cysteine 342–cysteine 362, and cysteine 411–cysteine 472. Cysteine 285 is a catalytic residue. The active site involves histidine 417. Positions glutamate 428–glycine 437 match the Arm motif; binds to host hemoglobin and required for the inhibitory interaction between the propeptide and the catalytic domain motif. Asparagine 447 is a catalytic residue.

Belongs to the peptidase C1 family. As to quaternary structure, component of the hemozoin formation complex (HFC) composed of falcipains FP2A and/or FP2B, plasmepsins PMII, PMIII/HAP and PMIV, heme detoxifying protein HDP and falcilysin FLN. The HFC complex is involved in hemoglobin degradation and detoxification of heme in the food vacuole during the asexual blood stage. In terms of processing, auto-cleaved to remove the propeptide.

It is found in the vacuole. Its subcellular location is the membrane. Its activity is regulated as follows. Inhibited by cysteine protease inhibitor ICP. Inhibited by heme and heme analogs. In terms of biological role, cysteine protease which cleaves native host hemoglobin and globin in the food vacuole during the asexual blood stage. The binding to host hemoglobin is pH-sensitive and only occurs at acidic pH. Cleaves ankyrin and protein 4.1, two components of host erythrocyte membrane cytoskeleton required for the stability of the erythrocyte membrane, and thus may be involved in parasite release. Preferentially cleaves substrates which have an arginine or lysine at the P1 position and a leucine or phenylalanine at the P2 position. This Plasmodium falciparum (isolate 3D7) protein is Falcipain-2a.